The primary structure comprises 409 residues: MALLAQQLSRWFNSVKLSSFIKATQVTKHSAGLGKNASAQALLSSDTCFLQWGIKTDRALFSWSSFQSANTTRRKSSTNSTLLPSVSEQPEKIPRLESELPLEELDDLPPLSPLQPVSEEEAIQIAAYSPLPLSSSTLADYVDHSETLQKLVQLGVDLSKIEKHPDVANLLLRLNFEKDIKQILLFLKDLGLEDNQLGPFLTKNYAIFSEDLENLKTRVAYLQSKNFSKTDIACMVKNAPFLLSFSVERLDNRLGFFQKELELSVKKTRDLVVRLPRLLTGSLEPVKENMKVYRLELGFKHNEIQHMVTKIPKMLTANKRKLTETFDYVHNVMNIPHHIIVKFPQVFNTRVFKIKERHLFLAYLGKAQYDPAKPNYVSLDKFVSFPDEVFCKEIAKASVNDFEKFLKTL.

Residues 1–64 (MALLAQQLSR…KTDRALFSWS (64 aa)) constitute a mitochondrion transit peptide. The tract at residues 74 to 93 (RKSSTNSTLLPSVSEQPEKI) is disordered.

This sequence belongs to the mTERF family.

Its subcellular location is the mitochondrion. Binds promoter DNA and regulates initiation of transcription. Required for normal mitochondrial transcription and translation, and for normal assembly of mitochondrial respiratory complexes. Required for normal mitochondrial function. Maintains 16S rRNA levels and functions in mitochondrial ribosome assembly by regulating the biogenesis of the 39S ribosomal subunit. The chain is Transcription termination factor 3, mitochondrial (Mterf3) from Rattus norvegicus (Rat).